Here is a 484-residue protein sequence, read N- to C-terminus: Aspartyl/glutamyl-tRNA(Asn/Gln) amidotransferase subunit B (484 aa).

This sequence belongs to the GatB/GatE family. GatB subfamily. As to quaternary structure, heterotrimer of A, B and C subunits.

It carries out the reaction L-glutamyl-tRNA(Gln) + L-glutamine + ATP + H2O = L-glutaminyl-tRNA(Gln) + L-glutamate + ADP + phosphate + H(+). The enzyme catalyses L-aspartyl-tRNA(Asn) + L-glutamine + ATP + H2O = L-asparaginyl-tRNA(Asn) + L-glutamate + ADP + phosphate + 2 H(+). In terms of biological role, allows the formation of correctly charged Asn-tRNA(Asn) or Gln-tRNA(Gln) through the transamidation of misacylated Asp-tRNA(Asn) or Glu-tRNA(Gln) in organisms which lack either or both of asparaginyl-tRNA or glutaminyl-tRNA synthetases. The reaction takes place in the presence of glutamine and ATP through an activated phospho-Asp-tRNA(Asn) or phospho-Glu-tRNA(Gln). The chain is Aspartyl/glutamyl-tRNA(Asn/Gln) amidotransferase subunit B from Bordetella pertussis (strain Tohama I / ATCC BAA-589 / NCTC 13251).